The chain runs to 431 residues: 3-isopropylmalate dehydratase large subunit (431 aa).

Cysteine 308, cysteine 368, and cysteine 371 together coordinate [4Fe-4S] cluster.

It belongs to the aconitase/IPM isomerase family. LeuC type 2 subfamily. In terms of assembly, heterodimer of LeuC and LeuD. Requires [4Fe-4S] cluster as cofactor.

The enzyme catalyses (2R,3S)-3-isopropylmalate = (2S)-2-isopropylmalate. It functions in the pathway amino-acid biosynthesis; L-leucine biosynthesis; L-leucine from 3-methyl-2-oxobutanoate: step 2/4. Functionally, catalyzes the isomerization between 2-isopropylmalate and 3-isopropylmalate, via the formation of 2-isopropylmaleate. In Desulfosudis oleivorans (strain DSM 6200 / JCM 39069 / Hxd3) (Desulfococcus oleovorans), this protein is 3-isopropylmalate dehydratase large subunit.